Reading from the N-terminus, the 461-residue chain is Probable metabolite transport protein CsbC (461 aa).

The Cytoplasmic segment spans residues 1-14; it reads MKKDTRKYMIYFFG. The chain crosses the membrane as a helical span at residues 15-35; sequence ALGGLLYGYDTGVISGALLFI. Residues 36 to 38 are Extracellular-facing; that stretch reads NND. Residues 39–59 form a helical membrane-spanning segment; sequence IPLTTLTEGLVVSMLLLGAIF. The Cytoplasmic segment spans residues 60-76; it reads GSALSGTCSDRWGRRKV. A helical membrane pass occupies residues 77 to 97; the sequence is VFVLSIIFIIGALACAFSQTI. The Extracellular segment spans residues 98–104; the sequence is GMLIASR. A helical membrane pass occupies residues 105–125; it reads VILGLAVGGSTALVPVYLSEM. Residues 126-139 lie on the Cytoplasmic side of the membrane; that stretch reads APTKIRGTLGTMNN. A helical membrane pass occupies residues 140 to 160; it reads LMIVTGILLAYIVNYLFTPFE. At 161 to 163 the chain is on the extracellular side; it reads AWR. Residues 164-184 form a helical membrane-spanning segment; that stretch reads WMVGLAAVPAVLLLIGIAFMP. Over 185–241 the chain is Cytoplasmic; it reads ESPRWLVKRGSEEEARRIMNITHDPKDIEMELAEMKQGEAEKKETTLGVLKAKWIRP. Residues 242-262 form a helical membrane-spanning segment; sequence MLLIGVGLAIFQQAVGINTVI. The Extracellular segment spans residues 263–280; sequence YYAPTIFTKAGLGTSASA. A helical transmembrane segment spans residues 281-301; that stretch reads LGTMGIGILNVIMCITAMILI. Topologically, residues 302-308 are cytoplasmic; it reads DRVGRKK. The helical transmembrane segment at 309–329 threads the bilayer; sequence LLIWGSVGITLSLAALSGVLL. Residues 330 to 341 are Extracellular-facing; it reads TLGLSASTAWMT. Residues 342–362 form a helical membrane-spanning segment; it reads VVFLGVYIVFYQATWGPVVWV. Topologically, residues 363 to 378 are cytoplasmic; sequence LMPELFPSKARGAATG. The chain crosses the membrane as a helical span at residues 379–399; that stretch reads FTTLVLSAANLIVSLVFPLML. Residues 400 to 402 lie on the Extracellular side of the membrane; the sequence is SAM. Residues 403 to 423 traverse the membrane as a helical segment; sequence GIAWVFMVFSVICLLSFFFAF. Residues 424–461 are Cytoplasmic-facing; sequence YMVPETKGKSLEEIEASLKKRFKKKKSTQNQVLNERTL.

This sequence belongs to the major facilitator superfamily. Sugar transporter (TC 2.A.1.1) family.

The protein resides in the cell membrane. Functionally, could serve either a nutritional or an osmotic protection function. The chain is Probable metabolite transport protein CsbC (csbC) from Bacillus subtilis (strain 168).